The chain runs to 234 residues: MATVKELKATARPSVGKGAARAERRAGRVPAVIYGDNKPPVTISLEDRELRLRILAGRFLTTVVDLDLDGTKHRVIPRDFHLDPVRDFPVHVDFLRLGEGATIRVSVPLHLKNSETAPGVKRGGTVNIVTHTVDLEAEADSIPQFIEADIGTLDIGTSLHLSDVVLPKGVKLVAAREDVTLVTIVPPSGFNEEQKAAAGAPAAAAPAAAAKAPAAGAKAPAAAAKAPAAPAKKK.

This sequence belongs to the bacterial ribosomal protein bL25 family. CTC subfamily. In terms of assembly, part of the 50S ribosomal subunit; part of the 5S rRNA/L5/L18/L25 subcomplex. Contacts the 5S rRNA. Binds to the 5S rRNA independently of L5 and L18.

This is one of the proteins that binds to the 5S RNA in the ribosome where it forms part of the central protuberance. The polypeptide is Large ribosomal subunit protein bL25 (Rhodopseudomonas palustris (strain BisA53)).